A 463-amino-acid polypeptide reads, in one-letter code: Sodium-coupled neutral amino acid transporter 7 (463 aa).

The residue at position 28 (serine 28) is a Phosphoserine. 11 helical membrane-spanning segments follow: residues 56-76, 82-102, 130-150, 179-199, 206-226, 240-260, 283-303, 320-340, 372-392, 396-416, and 429-449; these read AIFI…PAAF, VAAG…GLVI, LCEV…LIII, FTIS…REIG, FLSV…YIWP, ASWI…QCHV, AAMV…FLTF, MAVA…YPIL, VLQT…IPDI, ISVI…LCLI, and ASWW…AFIF.

The protein belongs to the amino acid/polyamine transporter 2 family. Interacts with the mTORC1 complex; this interaction mediates the recruitment of mTORC1 to the lysosome and its subsequent activation.

It is found in the lysosome membrane. Its subcellular location is the cell projection. It localises to the axon. It catalyses the reaction L-asparagine(in) + Na(+)(in) = L-asparagine(out) + Na(+)(out). The catalysed reaction is L-glutamine(in) + Na(+)(in) = L-glutamine(out) + Na(+)(out). In terms of biological role, symporter that selectively cotransports sodium ions and amino acids, such as L-glutamine and L-asparagine from the lysosome into the cytoplasm and may participates in mTORC1 activation. The transport activity requires an acidic lysosomal lumen. The protein is Sodium-coupled neutral amino acid transporter 7 of Bos taurus (Bovine).